A 197-amino-acid polypeptide reads, in one-letter code: Transmembrane 4 L6 family member 5 (197 aa).

Over 1 to 9 (MCTGKCARC) the chain is Cytoplasmic. Residues 10-30 (VGLSLITLCLVCIVANALLLV) form a helical membrane-spanning segment. Residues 31-46 (PNGETSWTNTNHLSLQ) are Extracellular-facing. Residues 47–67 (VWLMGGFIGGGLMVLCPGIAA) form a helical membrane-spanning segment. Residues 68 to 90 (VRAGGKGCCGAGCCGNRCRMLRS) lie on the Cytoplasmic side of the membrane. The helical transmembrane segment at 91–111 (VFSSAFGVLGAIYCLSVSGAG) threads the bilayer. The tract at residues 91-197 (VFSSAFGVLG…DCRKKQDTPH (107 aa)) is interaction with MTOR and CASTOR1. At 112–157 (LRNGPRCLMNGEWGYHFEDTAGAYLLNRTLWDRCEAPPRVVPWNVT) the chain is on the extracellular side. 124–129 (WGYHFE) lines the L-arginine pocket. N-linked (GlcNAc...) asparagine glycans are attached at residues asparagine 138 and asparagine 155. The chain crosses the membrane as a helical span at residues 158–178 (LFSLLVAASCLEIVLCGIQLV). The Cytoplasmic segment spans residues 179 to 197 (NATIGVFCGDCRKKQDTPH).

This sequence belongs to the L6 tetraspanin family. As to quaternary structure, interacts with MTOR; the interaction is positively regulated by arginine and is negatively regulated by leucine. Interacts with SLC38A9. Interacts with SLC7A1; the interaction is negatively regulated by arginine. Interacts with CASTOR1; the interaction is positively regulated by leucine and is negatively regulated by arginine. As to expression, intestine. Overexpressed in pancreatic cancers.

It localises to the lysosome membrane. The protein resides in the cell membrane. Its function is as follows. Acts as a lysosomal membrane arginine sensor. Forms a complex with MTOR and SLC38A9 on lysosomal membranes in an arginine-regulated manner, leading to arginine efflux which enables the activation of mTORC1 which subsequently leads to RPS6KB1 and EIF4EBP1 phosphorylations. Facilitates cell cycle G1/S phase progression and the translocation of the CDK4-CCND1 complex into the nucleus. CDKN1B and RHOA/ROCK signaling activity are involved in TM4SF5-mediated acceleration of G1/S phase progression. This is Transmembrane 4 L6 family member 5 (TM4SF5) from Homo sapiens (Human).